We begin with the raw amino-acid sequence, 706 residues long: MATKDLFAQPEPSRQPASPAERMAALRAELHAHAHRYYVLDEPTIPDSEYDRLFKELQDLEAAYPELLTPDSPTQRVGGKPLDQFASVRHKVPMLSIRTETDTEATGAQNFDTRVRKELGLTESNPPVEYVAELKFDGLAMSLRYEHGVLVQAATRGDGEVGEEVTQNIRTIRQIPLKLPSDAPPVLEVRGEVYMRRADFEALNDKQREKIAAGAKGEKTFVNPRNAAAGAVRQLDPAIAAQRPLSFFAYGVGEVVLEAEQANPKNPWVATHMELLQALKSWGFPVAAQTKIAHGASELIAFHQAMGQQRDSLPYDIDGVVYKVNSLALQKQMGFVSREPRWAVAHKYPAQEQLTTVLGIEVQVGRTGKLTPVAKLAPVFVGGVTVTNATLHNEDEARRKDVRVGDTVIVRRAGDVIPEVVSVLPDKRLPGAPMFTMPRQCPVCGSDAVREEGEADYRCTGGLFCGAQRKEAILHYAHRRAVEIEGLGDKLVEQLVDANVIRTLPDLYKLGLTALASLDRMAEKSANNLLKALEKSKQTTLPRFLFGLGIRHVGEATAKELARHFGNLDAIMDATQEQLLAVSDVGSIVAQSIRTFFDQPHNREVVEQLRACGVHWEEGEPAAVAPKPLSGKTFVITGTLPTLSRDEAKDKVEAAGGKVAGSVSKKTDYVVAGTEAGSKLVKAQELGIAVIDEAALMRLLASAEAE.

NAD(+) contacts are provided by residues 47-51 (DSEYD), 96-97 (SI), and glutamate 133. Lysine 135 serves as the catalytic N6-AMP-lysine intermediate. 4 residues coordinate NAD(+): arginine 156, glutamate 192, lysine 323, and lysine 347. Residues cysteine 441, cysteine 444, cysteine 459, and cysteine 465 each contribute to the Zn(2+) site. The BRCT domain maps to 624–706 (VAPKPLSGKT…MRLLASAEAE (83 aa)).

It belongs to the NAD-dependent DNA ligase family. LigA subfamily. Mg(2+) is required as a cofactor. Requires Mn(2+) as cofactor.

It carries out the reaction NAD(+) + (deoxyribonucleotide)n-3'-hydroxyl + 5'-phospho-(deoxyribonucleotide)m = (deoxyribonucleotide)n+m + AMP + beta-nicotinamide D-nucleotide.. Its function is as follows. DNA ligase that catalyzes the formation of phosphodiester linkages between 5'-phosphoryl and 3'-hydroxyl groups in double-stranded DNA using NAD as a coenzyme and as the energy source for the reaction. It is essential for DNA replication and repair of damaged DNA. The sequence is that of DNA ligase from Polaromonas sp. (strain JS666 / ATCC BAA-500).